We begin with the raw amino-acid sequence, 47 residues long: Conotoxin Cal6.18 (47 aa).

Positions 1–19 (MKLTYVLIVAMLVLVVCRA) are cleaved as a signal peptide.

The protein belongs to the conotoxin O1 superfamily. May contain 3 disulfide bonds. As to expression, expressed by the venom duct.

Its subcellular location is the secreted. In terms of biological role, probable neurotoxin. In Californiconus californicus (California cone), this protein is Conotoxin Cal6.18.